A 69-amino-acid chain; its full sequence is Double-strand break reduction protein (69 aa).

Helps to maintain the integrity of the chromosome by lowering the steady-state level of double strand breaks. This region of DNA acts as an antitoxin to toxin RalR, a DNase, but it seems to be sRNA RalA that has the antitoxin activity and not this putative protein. Therefore the identity of this as a protein-coding gene has been cast into doubt. This is Double-strand break reduction protein from Escherichia coli (strain K12).